The chain runs to 231 residues: Response regulator MprA (231 aa).

The region spanning 4 to 118 (RILVVDDDRA…ELLARMRALL (115 aa)) is the Response regulatory domain. Asp48 is modified (4-aspartylphosphate). Residues 130-228 (SAAMTFSDLS…VRGVGYVLRE (99 aa)) constitute a DNA-binding region (ompR/PhoB-type).

In terms of processing, phosphorylated and dephosphorylated by MprB.

The protein resides in the cytoplasm. Functionally, member of the two-component regulatory system MprB/MprA which contributes to maintaining a balance among several systems involved in stress resistance and is required for establishment and maintenance of persistent infection in the host. Functions as a transcriptional regulator that recognizes a 19-bp nucleotide motif comprizing two loosely conserved 8-bp direct DNA-binding motif repeats separated by a 3-bp spacer region. The polypeptide is Response regulator MprA (mprA) (Mycolicibacterium vanbaalenii (strain DSM 7251 / JCM 13017 / BCRC 16820 / KCTC 9966 / NRRL B-24157 / PYR-1) (Mycobacterium vanbaalenii)).